Consider the following 675-residue polypeptide: MAQVAKKILVTCALPYANGSIHLGHMLEHIQADIWVRFQRMRGNQVHFICADDAHGTPIMLKAQQMGIEPEQMIAEMSQEHQQDFAGFAISYDNYHSTHSDENRELSSLIYGRLKANGYIKNRTISQLYDPEKGMFLPDRFVKGTCPKCKAPEQYGDNCEVCGATYSPTELIDPKSAVSGATPVMRESEHFFFDLPAFSDMLQAWTRSGALQEQVANKMQEWFDSGLQQWDITRDAPYFGFEVPDAPGKYFYVWLDAPIGYMGAFKNLCDKRGDLDFDEFWGKDAKTDLYHFIGKDIVYFHSLFWPAMLEGSNFRKPTNLFVHGYVTVNGAKMSKSRGTFIKAGTYLKYLDADCLRYYYAAKLSSRIDDIDLNLEDFVQRVNVDIVNKVVNLASRNAGFINKRFAGQLADQLADPVLYKTFTDAATSIADAYNNRESGKAIREIMALADVANRYVDEQAPWVVAKQEGRDADLHAICSMGINLFRVLMTYLKPVLPSLTERTEAFLNTELTWDSIEQPLLGHSITAFKALFNRIDLDKVNEMVASSKEDMAPATRVTGPLADDPIQETISFDDFAKVDMRIALIQQAEFVEGSDKLLKLTLELGGETRQIFSGIRSAYPDPKALEGRMTVMVANLAPRKMRFGVSEGMVIAAGPGGSDIFLLSPDSGAQPGMQVK.

Positions 15–25 (PYANGSIHLGH) match the 'HIGH' region motif. Residues cysteine 146, cysteine 149, cysteine 159, and cysteine 162 each coordinate Zn(2+). A 'KMSKS' region motif is present at residues 332–336 (KMSKS). An ATP-binding site is contributed by lysine 335. The tRNA-binding domain maps to 573 to 675 (DFAKVDMRIA…SGAQPGMQVK (103 aa)).

Belongs to the class-I aminoacyl-tRNA synthetase family. MetG type 1 subfamily. In terms of assembly, homodimer. Zn(2+) is required as a cofactor.

It localises to the cytoplasm. It catalyses the reaction tRNA(Met) + L-methionine + ATP = L-methionyl-tRNA(Met) + AMP + diphosphate. Functionally, is required not only for elongation of protein synthesis but also for the initiation of all mRNA translation through initiator tRNA(fMet) aminoacylation. The polypeptide is Methionine--tRNA ligase (Yersinia pseudotuberculosis serotype O:3 (strain YPIII)).